Consider the following 402-residue polypeptide: S-adenosylmethionine synthase (402 aa).

Position 15 (His15) interacts with ATP. Asp17 is a binding site for Mg(2+). Glu43 lines the K(+) pocket. L-methionine is bound by residues Glu56 and Gln99. Positions 99 to 109 are flexible loop; that stretch reads QSPDIAQGVDT. ATP-binding positions include 174–176, 247–248, Asp256, 262–263, Ala279, and Lys283; these read DGK, RF, and RK. Asp256 contacts L-methionine. Lys287 contacts L-methionine.

It belongs to the AdoMet synthase family. In terms of assembly, homotetramer; dimer of dimers. Mg(2+) serves as cofactor. The cofactor is K(+).

Its subcellular location is the cytoplasm. The catalysed reaction is L-methionine + ATP + H2O = S-adenosyl-L-methionine + phosphate + diphosphate. It participates in amino-acid biosynthesis; S-adenosyl-L-methionine biosynthesis; S-adenosyl-L-methionine from L-methionine: step 1/1. Its function is as follows. Catalyzes the formation of S-adenosylmethionine (AdoMet) from methionine and ATP. The overall synthetic reaction is composed of two sequential steps, AdoMet formation and the subsequent tripolyphosphate hydrolysis which occurs prior to release of AdoMet from the enzyme. The protein is S-adenosylmethionine synthase of Streptomyces coelicolor (strain ATCC BAA-471 / A3(2) / M145).